Here is a 174-residue protein sequence, read N- to C-terminus: Large ribosomal subunit protein uL10 (174 aa).

It belongs to the universal ribosomal protein uL10 family. As to quaternary structure, part of the ribosomal stalk of the 50S ribosomal subunit. The N-terminus interacts with L11 and the large rRNA to form the base of the stalk. The C-terminus forms an elongated spine to which L12 dimers bind in a sequential fashion forming a multimeric L10(L12)X complex.

In terms of biological role, forms part of the ribosomal stalk, playing a central role in the interaction of the ribosome with GTP-bound translation factors. This Anaeromyxobacter sp. (strain Fw109-5) protein is Large ribosomal subunit protein uL10.